The chain runs to 90 residues: Accessory gland-specific peptide 26Ab (90 aa).

Positions 1–21 are cleaved as a signal peptide; the sequence is MNYFAVICIFSCICLWQFSDA.

Main cells and secondary cells of the accessory glands of 1 day old virgin males (at protein level). In 5 day old virgin males, only detected in the secondary cells (at protein level). Reappears in the main cells after mating (at protein level). First detected in adult males 3-4 hr after eclosion, levels increase reaching a peak at day 3-5 which is maintained until at least day 10 of adulthood (at protein level). In unmated male adults, levels are maintained for the first 6 days of adulthood and then gradually decrease for at least the next 8 days. No expression in females.

It is found in the secreted. Its subcellular location is the extracellular space. The protein resides in the cytoplasm. Its function is as follows. This protein is transferred from male to female during mating and may affect egglaying and behavior after mating. This chain is Accessory gland-specific peptide 26Ab, found in Drosophila melanogaster (Fruit fly).